The sequence spans 171 residues: Dual specificity protein phosphatase OPG106 (171 aa).

It belongs to the protein-tyrosine phosphatase family. Non-receptor class dual specificity subfamily. In terms of assembly, homodimer.

It localises to the virion. The protein resides in the host cytoplasm. The enzyme catalyses O-phospho-L-tyrosyl-[protein] + H2O = L-tyrosyl-[protein] + phosphate. The catalysed reaction is O-phospho-L-seryl-[protein] + H2O = L-seryl-[protein] + phosphate. In terms of biological role, serine/tyrosine phosphatase which down-regulates cellular antiviral response by dephosphorylating activated host STAT1 and blocking interferon (IFN)-stimulated innate immune responses. Dephosphorylates the OPG144 protein. The sequence is that of Dual specificity protein phosphatase OPG106 (OPG106) from Monkeypox virus.